The chain runs to 351 residues: uncharacterized protein (351 aa).

It belongs to the glycosyltransferase group 1 family. Glycosyltransferase 4 subfamily.

This is an uncharacterized protein from Methanocaldococcus jannaschii (strain ATCC 43067 / DSM 2661 / JAL-1 / JCM 10045 / NBRC 100440) (Methanococcus jannaschii).